Reading from the N-terminus, the 336-residue chain is Ribosomal RNA small subunit methyltransferase C (336 aa).

Belongs to the methyltransferase superfamily. RsmC family. In terms of assembly, monomer.

It localises to the cytoplasm. It catalyses the reaction guanosine(1207) in 16S rRNA + S-adenosyl-L-methionine = N(2)-methylguanosine(1207) in 16S rRNA + S-adenosyl-L-homocysteine + H(+). In terms of biological role, specifically methylates the guanine in position 1207 of 16S rRNA in the 30S particle. This chain is Ribosomal RNA small subunit methyltransferase C, found in Hamiltonella defensa subsp. Acyrthosiphon pisum (strain 5AT).